Reading from the N-terminus, the 352-residue chain is Small glutamine-rich tetratricopeptide repeat-containing protein 2 (352 aa).

The span at 80 to 97 (PAAASSSSTAPAAAAATP) shows a compositional bias: low complexity. The segment at 80–103 (PAAASSSSTAPAAAAATPSDEDLA) is disordered. 3 TPR repeats span residues 105-138 (AEQL…NPNS), 140-172 (VYFS…DPKF), and 173-206 (GKAY…DPSN). Residues 217–236 (KEQLSSSSSSNANDATASRG) form a disordered region.

This sequence belongs to the SGT family.

In terms of biological role, co-chaperone that binds to the molecular chaperone Hsp70 and regulates Hsp70 ATPase activity. In Mycosarcoma maydis (Corn smut fungus), this protein is Small glutamine-rich tetratricopeptide repeat-containing protein 2.